The chain runs to 2360 residues: Nucleoprotein TPR (2360 aa).

Ala-2 carries the post-translational modification N-acetylalanine. Positions 3-13 (AVLQQVLERPE) are sufficient for interaction with TPR. The necessary for interaction with HSF1 stretch occupies residues 14-117 (LNKLPKSTQN…GIQSQFTRAK (104 aa)). A coiled-coil region spans residues 24 to 370 (KLEKFLAEQQ…SATKRKGAIL (347 aa)). N6-acetyllysine occurs at positions 252, 312, and 345. Ser-379 is modified (phosphoserine). Positions 423–603 (LDEIVKEVEA…RESRQHQMQL (181 aa)) form a coiled coil. N6-acetyllysine is present on residues Lys-428, Lys-457, and Lys-477. The segment at 437-513 (LKRQREEYER…LMELEEARGN (77 aa)) is necessary for association to the NPC. 3 positions are modified to phosphoserine: Ser-522, Ser-523, and Ser-632. A coiled-coil region spans residues 664–1172 (ETIEAKAALK…IEKLSDKVVT (509 aa)). 4 positions are modified to N6-acetyllysine: Lys-713, Lys-723, Lys-748, and Lys-755. Positions 915-924 (LASQSTQRTG) are enriched in polar residues. The interval 915-939 (LASQSTQRTGKGQPGDRDDVDDLKS) is disordered. Over residues 928 to 939 (PGDRDDVDDLKS) the composition is skewed to basic and acidic residues. Phosphoserine is present on residues Ser-1180 and Ser-1185. Coiled coils occupy residues 1215–1420 (EVAQ…LDAK) and 1472–1629 (VQEM…QRDE). A necessary for interaction with HSF1 region spans residues 1218–1320 (QVESLRYRQR…NAELSEKSGM (103 aa)). Disordered stretches follow at residues 1479–1520 (KDNL…TAQL) and 1618–1673 (EHQE…PTPV). 2 stretches are compositionally biased toward basic and acidic residues: residues 1503 to 1512 (LSEKETEARS) and 1618 to 1630 (EHQERHLEQRDEP). Residues 1632 to 1651 (EPTNKAPEQQRQITLKTTPA) show a composition bias toward polar residues. Lys-1689 carries the N6-acetyllysine modification. The residue at position 1691 (Thr-1691) is a Phosphothreonine. A compositionally biased stretch (polar residues) spans 1801-1826 (QSSPVERPSTSTAVFGTVSATPSSSL). The interval 1801–2122 (QSSPVERPST…TPGIGGMQQH (322 aa)) is disordered. The sufficient and essential for mediating its nuclear import stretch occupies residues 1811 to 1866 (STAVFGTVSATPSSSLPKRAREEEEDSTIEAGDQVSDDTVEMPLPKKLKTVTPVGT). Over residues 1866 to 1880 (TEEEVMAEESTDGEA) the composition is skewed to acidic residues. Residues 1881 to 1892 (ETQTYNQDSQDS) show a composition bias toward polar residues. Ser-1892 carries the phosphoserine modification. Over residues 1923 to 1934 (QSDQQTTSSQDG) the composition is skewed to low complexity. Acidic residues-rich tracts occupy residues 1945–1986 (DSDD…EDSN) and 1996–2017 (DGYEADDAEGGDGTDPGTETEE). Positions 2023–2061 (ESNQRAADSQNSGEGNTSAAESSFSQEVAREQQPTSASE) are enriched in polar residues. 5 positions are modified to phosphoserine: Ser-2031, Ser-2034, Ser-2045, Ser-2047, and Ser-2070. 2 positions are modified to omega-N-methylarginine: Arg-2103 and Arg-2108. Residues Thr-2113 and Thr-2134 each carry the phosphothreonine modification. Phosphoserine is present on Ser-2152. An Omega-N-methylarginine modification is found at Arg-2160. A compositionally biased stretch (polar residues) spans 2224-2241 (ESTTSDASEHASQSVPMV). The interval 2224 to 2360 (ESTTSDASEH…RGGINRGNIN (137 aa)) is disordered. The segment covering 2242–2254 (TTSTGTLSTTNET) has biased composition (low complexity). 2 stretches are compositionally biased toward acidic residues: residues 2256–2269 (AGDDGDEVFVETES) and 2282–2296 (SQQEEEPVQASDESD). The span at 2297 to 2317 (LPSTSQDPPSSSSVDTSSSQP) shows a compositional bias: low complexity. Asymmetric dimethylarginine occurs at positions 2340, 2342, and 2351. Residues 2349-2360 (GGRGGINRGNIN) are compositionally biased toward gly residues.

This sequence belongs to the TPR family. Homodimer. Part of the nuclear pore complex (NPC). Associates with the XPO1/CRM1-mediated nuclear export complex, the Importin alpha/Importin beta receptor and the dynein 1 complex. Interacts (via C-terminal domain) with the KPNB1; the interaction occurs in a RanGTP-dependent manner. Interacts (via C-terminal region and phosphorylated form) with MAPK1/ERK2 (via phosphorylated form); the interaction requires dimerization of MAPK1/ERK2 and increases following EGF stimulation. Interacts with MAPK3/ERK1; the interaction increases following EGF stimulation. Interacts (via coiled coil region) with NUP153; the interaction is direct. Interacts with HSF1; the interaction increases in a stress-responsive manner and stimulates export of stress-induced HSP70 mRNA. Interacts with huntingtin/HTT; the interaction is inhibited by aggregated huntingtin/HTT forms with expanded polyglutamine stretch. Interacts with MAD1L1 (via N-terminal region), MAD2L1, and TTK; the interactions occurs in a microtubule-independent manner. Interacts (via middle region) with DYNLL1. Interacts with DCTN1, dynein, NUP153 and tubulin. Interacts with IFI204 (via C-terminal region). Interacts with IFI203. Interacts with MTA1. Interacts with ZC3HC1; this interaction mediates ZC3HC1 nuclear envelopes (NE)-association but also required for proper positioning of a substantial amount of TPR at the nuclear basket (NB). Phosphorylated. Phosphorylation occurs on serine and threonine residues (comprised in the C-terminal region) by MAPK1/ERK2 and stabilizes the interaction between these two proteins.

The protein localises to the nucleus. It localises to the nucleus membrane. Its subcellular location is the nucleus envelope. It is found in the nuclear pore complex. The protein resides in the cytoplasm. The protein localises to the cytoskeleton. It localises to the spindle. Its subcellular location is the chromosome. It is found in the centromere. The protein resides in the kinetochore. In terms of biological role, component of the nuclear pore complex (NPC), a complex required for the trafficking across the nuclear envelope. Functions as a scaffolding element in the nuclear phase of the NPC essential for normal nucleocytoplasmic transport of proteins and mRNAs, plays a role in the establishment of nuclear-peripheral chromatin compartmentalization in interphase, and in the mitotic spindle checkpoint signaling during mitosis. Involved in the quality control and retention of unspliced mRNAs in the nucleus; in association with NUP153, regulates the nuclear export of unspliced mRNA species bearing constitutive transport element (CTE) in a NXF1- and KHDRBS1-independent manner. Negatively regulates both the association of CTE-containing mRNA with large polyribosomes and translation initiation. Does not play any role in Rev response element (RRE)-mediated export of unspliced mRNAs. Implicated in nuclear export of mRNAs transcribed from heat shock gene promoters; associates both with chromatin in the HSP70 promoter and with mRNAs transcribed from this promoter under stress-induced conditions. Modulates the nucleocytoplasmic transport of activated MAPK1/ERK2 and huntingtin/HTT and may serve as a docking site for the XPO1/CRM1-mediated nuclear export complex. Also plays a role as a structural and functional element of the perinuclear chromatin distribution; involved in the formation and/or maintenance of NPC-associated perinuclear heterochromatin exclusion zones (HEZs). Finally, acts as a spatial regulator of the spindle-assembly checkpoint (SAC) response ensuring a timely and effective recruitment of spindle checkpoint proteins like MAD1L1 and MAD2L1 to unattached kinetochore during the metaphase-anaphase transition before chromosome congression. Its N-terminus is involved in activation of oncogenic kinases. Plays a role in the regulation of nuclear protein export. In Rattus norvegicus (Rat), this protein is Nucleoprotein TPR.